The following is a 251-amino-acid chain: Prolactin-7B1 (251 aa).

The first 29 residues, 1–29, serve as a signal peptide directing secretion; it reads MNTSLTQLCFWALQILLMSNLLLWEDVVS. 2 N-linked (GlcNAc...) asparagine glycosylation sites follow: Asn2 and Asn73. 2 disulfide bridges follow: Cys100-Cys216 and Cys233-Cys241.

Belongs to the somatotropin/prolactin family. As to expression, expression restricted to placenta. Abundantly expressed in trophoblast cells of the junctional zone and trophoblasts migrating into the mesometrial decidua.

It localises to the secreted. The protein is Prolactin-7B1 (Prl7b1) of Mus musculus (Mouse).